The following is a 71-amino-acid chain: Kunitz-type serine protease inhibitor HNTX-852 (71 aa).

Residues 1–22 form the signal peptide; it reads DPSGSPHIRILPQETFEDICRL. Disulfide bonds link C20–C68 and C43–C64. A BPTI/Kunitz inhibitor domain is found at 23 to 68; the sequence is PSDSGDCLRFFEMWYFDGTTCTKFVYGGYGGNDNRFPTEKACMKRC.

Belongs to the venom Kunitz-type family. 03 (sub-Kunitz) subfamily. As to expression, expressed by the venom gland.

It localises to the secreted. In terms of biological role, serine protease inhibitor that inhibits trypsin at a molar ratio of 1:1. The protein is Kunitz-type serine protease inhibitor HNTX-852 of Cyriopagopus hainanus (Chinese bird spider).